We begin with the raw amino-acid sequence, 308 residues long: MTTLVHDEHPGLTHLQRLEADSIQIIREAVAESERPVMLYSIGKDSSVLLHLARKAFRPSRLPFPLLHVDTTWKFRAMYAFRDAVAAEPDLDLIVHRNPDCVAQGINPFDHGSALHTQMWKTEGLKQALDQHGFDLAFGGARRDEEKSRAKERVFSIRSAQHRWDPKRQRPELWRLYNASKRPGESVRVFPLSNWTELDIWQYIHREAIPLVPLYFAALRPVVERDGTLIMVDDDRMRLDPGEVPQERMVRFRTLGCYPLSGAIPSTATTVPEVVQEMLLTTSSERQGRIIDHDGSASMEKKKQEGYF.

A disordered region spans residues 286–308; sequence RQGRIIDHDGSASMEKKKQEGYF.

The protein belongs to the PAPS reductase family. CysD subfamily. As to quaternary structure, heterodimer composed of CysD, the smaller subunit, and CysN.

The enzyme catalyses sulfate + ATP + H(+) = adenosine 5'-phosphosulfate + diphosphate. It functions in the pathway sulfur metabolism; hydrogen sulfide biosynthesis; sulfite from sulfate: step 1/3. In terms of biological role, with CysN forms the ATP sulfurylase (ATPS) that catalyzes the adenylation of sulfate producing adenosine 5'-phosphosulfate (APS) and diphosphate, the first enzymatic step in sulfur assimilation pathway. APS synthesis involves the formation of a high-energy phosphoric-sulfuric acid anhydride bond driven by GTP hydrolysis by CysN coupled to ATP hydrolysis by CysD. The polypeptide is Sulfate adenylyltransferase subunit 2 (Nocardia farcinica (strain IFM 10152)).